The following is a 508-amino-acid chain: Histidine ammonia-lyase (508 aa).

The 5-imidazolinone (Ala-Gly) cross-link spans 145–147 (ASG). A 2,3-didehydroalanine (Ser) modification is found at Ser146.

It belongs to the PAL/histidase family. In terms of processing, contains an active site 4-methylidene-imidazol-5-one (MIO), which is formed autocatalytically by cyclization and dehydration of residues Ala-Ser-Gly.

Its subcellular location is the cytoplasm. The enzyme catalyses L-histidine = trans-urocanate + NH4(+). Its pathway is amino-acid degradation; L-histidine degradation into L-glutamate; N-formimidoyl-L-glutamate from L-histidine: step 1/3. The protein is Histidine ammonia-lyase of Myxococcus xanthus (strain DK1622).